Here is a 216-residue protein sequence, read N- to C-terminus: Uridine kinase (216 aa).

16–23 (GASASGKS) contacts ATP.

The protein belongs to the uridine kinase family.

It is found in the cytoplasm. The catalysed reaction is uridine + ATP = UMP + ADP + H(+). It carries out the reaction cytidine + ATP = CMP + ADP + H(+). It functions in the pathway pyrimidine metabolism; CTP biosynthesis via salvage pathway; CTP from cytidine: step 1/3. It participates in pyrimidine metabolism; UMP biosynthesis via salvage pathway; UMP from uridine: step 1/1. The chain is Uridine kinase from Pasteurella multocida (strain Pm70).